The chain runs to 40 residues: MADTTGRIPLWLIGTVTGIPVIGLIGIFFYGSYSGLGSSL.

The helical transmembrane segment at 8-28 threads the bilayer; sequence IPLWLIGTVTGIPVIGLIGIF.

This sequence belongs to the PsbJ family. In terms of assembly, PSII is composed of 1 copy each of membrane proteins PsbA, PsbB, PsbC, PsbD, PsbE, PsbF, PsbH, PsbI, PsbJ, PsbK, PsbL, PsbM, PsbT, PsbX, PsbY, PsbZ, Psb30/Ycf12, at least 3 peripheral proteins of the oxygen-evolving complex and a large number of cofactors. It forms dimeric complexes.

Its subcellular location is the plastid. It localises to the chloroplast thylakoid membrane. Functionally, one of the components of the core complex of photosystem II (PSII). PSII is a light-driven water:plastoquinone oxidoreductase that uses light energy to abstract electrons from H(2)O, generating O(2) and a proton gradient subsequently used for ATP formation. It consists of a core antenna complex that captures photons, and an electron transfer chain that converts photonic excitation into a charge separation. The protein is Photosystem II reaction center protein J of Vitis vinifera (Grape).